The chain runs to 507 residues: Putative histone deacetylase 2 (507 aa).

The interval 29-342 is histone deacetylase; sequence RNVAYYYHKD…WALETGVILG (314 aa). Histidine 162 is an active-site residue. Residues 444–507 are disordered; it reads EECFVEEDSK…RKDLNIPGIP (64 aa). The span at 482 to 501 shows a compositional bias: basic and acidic residues; the sequence is SHSDVIEEAKYEDRDRRKDL.

Belongs to the histone deacetylase family. HD type 1 subfamily. May be a component of a histone deacetylase complex containing saeg-2, saeg-1 and hda-2.

It is found in the nucleus. The catalysed reaction is N(6)-acetyl-L-lysyl-[histone] + H2O = L-lysyl-[histone] + acetate. Probably responsible for the deacetylation of lysine residues on the N-terminal part of the core histones (H2A, H2B, H3 and H4). Histone deacetylation gives a tag for epigenetic repression and plays an important role in transcriptional regulation, cell cycle progression and developmental events. Histone deacetylases act via the formation of large multiprotein complexes. As a likely component of a histone deacetylase complex, together with saeg-1 and hda-2, functions downstream of the cAMP-dependent kinase egl-4 to regulate the expression of genes required for egg-laying and forgaging. This is Putative histone deacetylase 2 (hda-2) from Caenorhabditis elegans.